Reading from the N-terminus, the 112-residue chain is Nucleoid-associated protein FTW_0607 (112 aa).

Positions 1–27 are disordered; sequence MNFDMSKLMQQAQKMQEQMKKAQQERE. Residues 17 to 27 show a composition bias toward basic and acidic residues; sequence EQMKKAQQERE.

The protein belongs to the YbaB/EbfC family. As to quaternary structure, homodimer.

Its subcellular location is the cytoplasm. The protein resides in the nucleoid. Its function is as follows. Binds to DNA and alters its conformation. May be involved in regulation of gene expression, nucleoid organization and DNA protection. This is Nucleoid-associated protein FTW_0607 from Francisella tularensis subsp. tularensis (strain WY96-3418).